A 365-amino-acid polypeptide reads, in one-letter code: tRNA 2-selenouridine synthase (365 aa).

The Rhodanese domain maps to 16–138 (FLLKTPLIDL…LRRYLINVID (123 aa)). Cys-98 acts as the S-selanylcysteine intermediate in catalysis.

The protein belongs to the SelU family. As to quaternary structure, monomer.

It catalyses the reaction 5-methylaminomethyl-2-thiouridine(34) in tRNA + selenophosphate + (2E)-geranyl diphosphate + H2O + H(+) = 5-methylaminomethyl-2-selenouridine(34) in tRNA + (2E)-thiogeraniol + phosphate + diphosphate. The catalysed reaction is 5-methylaminomethyl-2-thiouridine(34) in tRNA + (2E)-geranyl diphosphate = 5-methylaminomethyl-S-(2E)-geranyl-thiouridine(34) in tRNA + diphosphate. It carries out the reaction 5-methylaminomethyl-S-(2E)-geranyl-thiouridine(34) in tRNA + selenophosphate + H(+) = 5-methylaminomethyl-2-(Se-phospho)selenouridine(34) in tRNA + (2E)-thiogeraniol. The enzyme catalyses 5-methylaminomethyl-2-(Se-phospho)selenouridine(34) in tRNA + H2O = 5-methylaminomethyl-2-selenouridine(34) in tRNA + phosphate. In terms of biological role, involved in the post-transcriptional modification of the uridine at the wobble position (U34) of tRNA(Lys), tRNA(Glu) and tRNA(Gln). Catalyzes the conversion of 2-thiouridine (S2U-RNA) to 2-selenouridine (Se2U-RNA). Acts in a two-step process involving geranylation of 2-thiouridine (S2U) to S-geranyl-2-thiouridine (geS2U) and subsequent selenation of the latter derivative to 2-selenouridine (Se2U) in the tRNA chain. This Psychromonas ingrahamii (strain DSM 17664 / CCUG 51855 / 37) protein is tRNA 2-selenouridine synthase.